Reading from the N-terminus, the 2004-residue chain is Histone acetyltransferase KAT6A (2004 aa).

One can recognise an SAMD1-like winged helix (WH) domain in the interval 1–77; it reads MVKLANPLYT…LNSYKDPDNP (77 aa). A required for activation of RUNX1-1 region spans residues 1–144; that stretch reads MVKLANPLYT…FGGSAASGFH (144 aa). The tract at residues 52–166 is required for nuclear localization; that stretch reads ELSVKDGTIL…HGRLLKDGPL (115 aa). The 77-residue stretch at 95-171 folds into the H15 domain; sequence QNVDWNKLIK…KDGPLYRLNT (77 aa). Positions 144–664 are interaction with PML; that stretch reads HQQLRLAIKR…RKGYGRFLID (521 aa). N6-acetyllysine is present on K172. 2 PHD-type zinc fingers span residues 206-265 and 259-313; these read IPIC…CKTC and CIEC…CRPR. Residues 312 to 664 are interaction with RUNX1-1; that stretch reads PRKKGRKLLQ…RKGYGRFLID (353 aa). Residues 334-375 are disordered; that stretch reads PIGRPKNRLKKQNTVSKGPFSKVRTGPGRGRKRKITLSSQSA. 2 positions are modified to N6-acetyllysine: K350 and K355. A Phosphothreonine; by PKB/AKT1 modification is found at T369. A Phosphoserine modification is found at S420. The tract at residues 441–464 is disordered; that stretch reads KRGNRKSSTSDWPTDNQDGWDGKQ. The span at 446–457 shows a compositional bias: polar residues; sequence KSSTSDWPTDNQ. S473 carries the phosphoserine modification. The catalytic stretch occupies residues 488 to 778; sequence IQEQALQKVG…VDPECLRWTP (291 aa). The region spanning 504–778 is the MYST-type HAT domain; sequence PQVRCPSVIE…VDPECLRWTP (275 aa). Residues 507 to 810 form a mediates interaction with BRPF1, required for histone H3 acetyltransferase activity region; sequence RCPSVIEFGK…EPQCQERELE (304 aa). Residues 537-562 form a C2HC MYST-type zinc finger; it reads LYLCEFCLKYMKSRTILQQHMKKCGW. K604 carries the N6-acetyllysine; by autocatalysis modification. Acetyl-CoA contacts are provided by residues 645–649 and 654–660; these read SCIMI and QRKGYGR. E680 acts as the Proton donor/acceptor in catalysis. Residue S684 participates in acetyl-CoA binding. Disordered stretches follow at residues 785-1445, 1461-1621, and 1637-1721; these read VVSE…AYQD, QADE…MMQQ, and SCVV…MEIP. Phosphoserine occurs at positions 787 and 812. The segment covering 787–803 has biased composition (acidic residues); sequence SEEEEEEAEEGENEEPQ. An N6-acetyllysine modification is found at K815. Residues 817–836 are compositionally biased toward basic and acidic residues; sequence VSHENKEQDSYSVESEKKPE. K834 is covalently cross-linked (Glycyl lysine isopeptide (Lys-Gly) (interchain with G-Cter in SUMO2)). Residues 864–873 are compositionally biased toward basic residues; it reads RRGRWGRKNR. Over residues 874-888 the composition is skewed to basic and acidic residues; it reads KTQERFGDKDSKLLL. Phosphotyrosine is present on Y899. 2 stretches are compositionally biased toward basic and acidic residues: residues 931–942 and 953–980; these read GKPDLPKRRLSE and KSPE…DRAV. 3 positions are modified to phosphoserine: S941, S954, and S974. N6-acetyllysine is present on K1007. The span at 1009–1030 shows a compositional bias: basic residues; the sequence is TLKRKKPFLHRRRRVRKRKHHN. Residues 1031-1042 show a composition bias toward low complexity; sequence SSVVTETISETT. Acidic residues-rich tracts occupy residues 1043-1053 and 1065-1078; these read EVLDEPFEDSD and FEID…DENE. A phosphoserine mark is found at S1089, S1090, and S1113. The segment covering 1107-1118 has biased composition (acidic residues); it reads EEEDEESDDADD. Basic residues predominate over residues 1146–1172; it reads LKKKKGWPKGKSRKPIHWKKRPGRKPG. Basic and acidic residues predominate over residues 1203–1223; it reads KIQESEETVEPKEDMPLPEER. The span at 1224-1245 shows a compositional bias: acidic residues; it reads KEEEEMQAEAEEAEEGEEEDAA. Positions 1246–1262 are enriched in low complexity; it reads SSEVPAASPADSSNSPE. Basic and acidic residues predominate over residues 1275–1287; it reads EKPRVSEEQRQSE. Residues 1288–1305 are compositionally biased toward acidic residues; it reads EEQQELEEPEPEEEEDAA. Composition is skewed to basic and acidic residues over residues 1323-1345, 1358-1367, and 1398-1420; these read HLES…KEEP, KSREKIKDKE, and EDSH…HSEL. K1342 is covalently cross-linked (Glycyl lysine isopeptide (Lys-Gly) (interchain with G-Cter in SUMO2)). Over residues 1481 to 1503 the composition is skewed to low complexity; that stretch reads SPISSVQSHPSQSVRSVSSPNVP. Positions 1508–1529 are enriched in polar residues; sequence GYTQISPEQGSLSAPSMQNMET. The interaction with RUNX1-2 stretch occupies residues 1517–1642; that stretch reads GSLSAPSMQN…KSPQSCVVER (126 aa). The interval 1517–1741 is interaction with PML; sequence GSLSAPSMQN…YERIPGDFGA (225 aa). Positions 1534 to 1548 are enriched in low complexity; sequence DVPSVSDHSQQVVDS. The span at 1556–1573 shows a compositional bias: polar residues; that stretch reads IESTTENYENPSSYDSTM. Positions 1574–1621 are enriched in low complexity; the sequence is GGSICGNSSSQSSCSYGGLSSSSSLTQSSCVVTQQMASMGSSCSMMQQ. Over residues 1650–1699 the composition is skewed to pro residues; sequence QPPPPPPQQPQPPPPQPQPAPQPPPPQQQPQQQPQPQPQQPPPPPPPQQQ. Over residues 1702 to 1712 the composition is skewed to polar residues; that stretch reads LSQCSMNNSFT. The interval 1913-1948 is required for activation of RUNX1-2; sequence SMNMNTLNAMNSYRMTQPMMNSSYHSNPAYMNQTAQ.

It belongs to the MYST (SAS/MOZ) family. Component of the MOZ/MORF complex composed at least of ING5, KAT6A, KAT6B, MEAF6 and one of BRPF1, BRD1/BRPF2 and BRPF3. Interacts with RUNX1; phosphorylation of RUNX1 enhances the interaction. Interacts with RUNX2. Interacts with p53/TP53. Interacts with PML (isoform PML-4) and this interaction positively regulates its acetylation activity towards p53/TP53. Post-translationally, autoacetylation at Lys-604 is required for proper function. Autoacetylated. In terms of processing, phosphorylation at Thr-369 by PKB/AKT1 inhibits its interaction with PML and negatively regulates its acetylation activity towards p53/TP53.

The protein localises to the nucleus. Its subcellular location is the nucleolus. It localises to the nucleoplasm. The protein resides in the PML body. The catalysed reaction is L-lysyl-[protein] + acetyl-CoA = N(6)-acetyl-L-lysyl-[protein] + CoA + H(+). Functionally, histone acetyltransferase that acetylates lysine residues in histone H3 and histone H4 (in vitro). Component of the MOZ/MORF complex which has a histone H3 acetyltransferase activity. May act as a transcriptional coactivator for RUNX1 and RUNX2. Acetylates p53/TP53 at 'Lys-120' and 'Lys-382' and controls its transcriptional activity via association with PML. The protein is Histone acetyltransferase KAT6A (KAT6A) of Homo sapiens (Human).